Here is a 455-residue protein sequence, read N- to C-terminus: Glutamyl-tRNA reductase (455 aa).

Substrate is bound by residues 49–52, S109, 114–116, and Q120; these read TCNR and EAQ. The active-site Nucleophile is C50. Residue 190 to 195 participates in NADP(+) binding; that stretch reads GAGAMG.

This sequence belongs to the glutamyl-tRNA reductase family. Homodimer.

It carries out the reaction (S)-4-amino-5-oxopentanoate + tRNA(Glu) + NADP(+) = L-glutamyl-tRNA(Glu) + NADPH + H(+). It functions in the pathway porphyrin-containing compound metabolism; protoporphyrin-IX biosynthesis; 5-aminolevulinate from L-glutamyl-tRNA(Glu): step 1/2. Catalyzes the NADPH-dependent reduction of glutamyl-tRNA(Glu) to glutamate 1-semialdehyde (GSA). In Salinispora tropica (strain ATCC BAA-916 / DSM 44818 / JCM 13857 / NBRC 105044 / CNB-440), this protein is Glutamyl-tRNA reductase.